Consider the following 51-residue polypeptide: MARYRCCRSQSRSRCCRPRRRCRRRRRRSCRARRRATRCCRRRYRLRCRRY.

Belongs to the protamine P1 family. As to expression, testis.

The protein resides in the nucleus. It localises to the chromosome. Its function is as follows. Protamines substitute for histones in the chromatin of sperm during the haploid phase of spermatogenesis. They compact sperm DNA into a highly condensed, stable and inactive complex. This Trachypithecus francoisi (Francois' leaf monkey) protein is Sperm protamine P1 (PRM1).